Reading from the N-terminus, the 1001-residue chain is Integrator complex subunit 7 (1001 aa).

The interval 980–1001 is disordered; it reads DPSKQGAPAPSTSQAVGQTRRF. Positions 989-1001 are enriched in polar residues; sequence PSTSQAVGQTRRF.

This sequence belongs to the Integrator subunit 7 family. Belongs to the multiprotein complex Integrator, at least composed of IntS1, IntS2, IntS3, IntS4, omd/IntS5, IntS6, defl/IntS7, IntS8, IntS9, IntS10, IntS11, IntS12, asun/IntS13, IntS14 and IntS15. The core complex associates with protein phosphatase 2A subunits mts/PP2A and Pp2A-29B, to form the Integrator-PP2A (INTAC) complex.

The protein localises to the nucleus. Its subcellular location is the cytoplasm. In terms of biological role, component of the integrator complex, a multiprotein complex that terminates RNA polymerase II (Pol II) transcription in the promoter-proximal region of genes. The integrator complex provides a quality checkpoint during transcription elongation by driving premature transcription termination of transcripts that are unfavorably configured for transcriptional elongation: the complex terminates transcription by (1) catalyzing dephosphorylation of the C-terminal domain (CTD) of Pol II subunit Polr2A/Rbp1 and Spt5, and (2) degrading the exiting nascent RNA transcript via endonuclease activity. The integrator complex is also involved in the 3'-end processing of the U7 snRNA, and also the spliceosomal snRNAs U1, U2, U4 and U5. The protein is Integrator complex subunit 7 of Drosophila melanogaster (Fruit fly).